A 206-amino-acid polypeptide reads, in one-letter code: Bacterial microcompartment protein trimer-3 (206 aa).

2 consecutive BMC circularly permuted domains span residues 2–104 and 105–206; these read ELRA…RLAP and RVVS…DNRG. Positions 67-68 match the Pore gating residues motif; the sequence is ER.

Belongs to the EutL/PduB family. Homotrimerizes to form a pseudohexamer. These stack, with the concave faces together, with the concave faces together, in purified bacterial microcompartments (BMC).

It localises to the bacterial microcompartment. A minor component of the bacterial microcompartment (BMC) shell. Expression of 5 proteins in E.coli (BMC-H (Hoch_5815), BMC-P (Hoch_5814), and 3 BMC-T (Hoch_5812, Hoch_5816, Hoch_3341)) forms 40 nm artificial BMCs with a molecular mass of 6.5 MDa. One of 2 stacked pseudohexamers in the BMC. There are 20 BMC-T pseudohexamers per BMC, composed of mixed BMC-T1, BMC-T2 and BMC-T3. The shell facets are 20-30 Angstroms thick, with 1 of the stacked BMC-T trimers protruding to the exterior. The stacked trimers may serve as conduits to allow metabolite flux across the protein shell, gated by Arg-68 which contacts Glu-67 in an adjacent subunit; they are flexible enough to play a role in accommodating variations in shell assembly. This chain is Bacterial microcompartment protein trimer-3, found in Haliangium ochraceum (strain DSM 14365 / JCM 11303 / SMP-2).